Reading from the N-terminus, the 178-residue chain is Large ribosomal subunit protein uL16 (178 aa).

Belongs to the universal ribosomal protein uL16 family.

In Saccharolobus solfataricus (strain ATCC 35092 / DSM 1617 / JCM 11322 / P2) (Sulfolobus solfataricus), this protein is Large ribosomal subunit protein uL16.